Reading from the N-terminus, the 177-residue chain is Small ribosomal subunit protein eS10z (177 aa).

The segment at 90–177 (TLKKSAKPGG…AAAPSGSGFP (88 aa)) is disordered. Over residues 108-140 (DRQRGPPRSDGDRPRFGDRDGYRGGPRGGDEKG) the composition is skewed to basic and acidic residues. Residues 141–150 (GAPADFQPSF) are compositionally biased toward low complexity. Residues 151-165 (QGGGGRPGFGRGAGG) are compositionally biased toward gly residues. The segment covering 166-177 (YSAAAPSGSGFP) has biased composition (low complexity).

It belongs to the eukaryotic ribosomal protein eS10 family.

The protein resides in the cytoplasm. This is Small ribosomal subunit protein eS10z (RPS10A) from Arabidopsis thaliana (Mouse-ear cress).